Consider the following 240-residue polypeptide: Probable transcriptional regulatory protein VFMJ11_A0186 (240 aa).

The protein belongs to the TACO1 family.

It is found in the cytoplasm. The sequence is that of Probable transcriptional regulatory protein VFMJ11_A0186 from Aliivibrio fischeri (strain MJ11) (Vibrio fischeri).